Reading from the N-terminus, the 370-residue chain is Protein DVU_0535 (370 aa).

Over 1 to 258 (MDRRRFLTLL…EELGTKSAPE (258 aa)) the chain is Cytoplasmic. 4Fe-4S ferredoxin-type domains follow at residues 40 to 70 (YGVL…APKA), 101 to 132 (DHPV…KNPD), and 133 to 162 (GSVT…FQYA). [4Fe-4S] cluster contacts are provided by Cys49, Cys52, Cys55, Cys59, Cys110, Cys113, Cys118, Cys122, Cys142, Cys145, Cys148, Cys152, Cys172, Cys175, Cys187, and Cys191. Residues 259–284 (YTAGALGAVPMVVGIWPILLTGAYAI) form a helical membrane-spanning segment. The Periplasmic segment spans residues 285–370 (TKRKEKIAAE…DDAGKPGEDA (86 aa)). Positions 345 to 355 (FEEELAAKEQP) are enriched in basic and acidic residues. The disordered stretch occupies residues 345 to 370 (FEEELAAKEQPEAPEGDDAGKPGEDA).

The protein resides in the cell membrane. In terms of biological role, HMWC (high-molecular-weight cytochrome c precursor), ORF2, ORF3, ORF4, ORF5, ORF6 in the HMC operon form a transmembrane protein complex that allows electron flow from the periplasmic hydrogenase to the cytoplasmic enzymes that catalyze reduction of sulfates. ORF2 is a transmembrane redox protein. The chain is Protein DVU_0535 from Nitratidesulfovibrio vulgaris (strain ATCC 29579 / DSM 644 / CCUG 34227 / NCIMB 8303 / VKM B-1760 / Hildenborough) (Desulfovibrio vulgaris).